The chain runs to 526 residues: Probable inorganic phosphate transporter 1-3 (526 aa).

Residues 1–21 (MADGQLKVLTTLDHARTQWYH) lie on the Cytoplasmic side of the membrane. The helical transmembrane segment at 22–42 (FMAIVIAGMGFFTDAYDLFCI) threads the bilayer. The Extracellular segment spans residues 43–70 (SLVSKLLGRIYYTDLAGDNPGSLPPNVS). The helical transmembrane segment at 71-91 (AAVNGVALCGTLAGQLFFGWL) threads the bilayer. The Cytoplasmic portion of the chain corresponds to 92 to 99 (GDKLGRKS). The helical transmembrane segment at 100 to 120 (VYGFTLVLMVVCSVASGLSFG) threads the bilayer. Topologically, residues 121-124 (RTAK) are extracellular. Residues 125–145 (GVVATLCFFRFWLGFGIGGDY) form a helical membrane-spanning segment. The Cytoplasmic segment spans residues 146–163 (PLSATIMSEYANKRTRGA). A helical transmembrane segment spans residues 164–184 (FIAAVFAMQGFGILFGAIVAL). The Extracellular portion of the chain corresponds to 185–211 (VVSAGFRNAYPAPSYADGRAASLVPEA). Residues 212–232 (DYVWRIILMFGTVPAALTYYW) form a helical membrane-spanning segment. Over 233–294 (RMKMPETARY…GLFSRQFVRR (62 aa)) the chain is Cytoplasmic. A helical membrane pass occupies residues 295-315 (HGVHLVATTSTWFLLDIAFYS). The Extracellular portion of the chain corresponds to 316–349 (QNLFQKDIFSKVGWIPPARTMNAVEEVFRIARAQ). Residues 350 to 370 (ALIALCGTIPGYWFTVAFIDV) traverse the membrane as a helical segment. At 371–373 (AGR) the chain is on the cytoplasmic side. Residues 374-394 (FAIQLMGFAMMTVFMLGLAAP) traverse the membrane as a helical segment. Over 395 to 407 (YHHWTTPGNHTGF) the chain is Extracellular. The helical transmembrane segment at 408-428 (VVMYGFTFFFANFGPNATTFI) threads the bilayer. The Cytoplasmic portion of the chain corresponds to 429–444 (VPAEIYPARLRSTCHG). A helical membrane pass occupies residues 445–465 (ISAAAGKAGAIVGAFGFLYAA). The Extracellular portion of the chain corresponds to 466–483 (QDPHKPEAGYKPGIGIRN). Residues 484-504 (ALFVLAGTNFLGMLMTLLVPE) form a helical membrane-spanning segment. Topologically, residues 505–526 (SKGMSLEEVSKENVADDEEATA) are cytoplasmic.

It belongs to the major facilitator superfamily. Phosphate:H(+) symporter (TC 2.A.1.9) family. In terms of tissue distribution, expressed at low levels in roots.

It localises to the membrane. In terms of biological role, high-affinity transporter for external inorganic phosphate. The polypeptide is Probable inorganic phosphate transporter 1-3 (PHT1-3) (Oryza sativa subsp. japonica (Rice)).